Consider the following 878-residue polypeptide: Interleukin-3 receptor class 2 subunit beta (878 aa).

The first 22 residues, 1-22 (MDQQMALTWGLCYMALVALCWG), serve as a signal peptide directing secretion. Over 23-440 (HEVTEEEETV…SNEYTWTTDW (418 aa)) the chain is Extracellular. The cysteines at positions 39 and 49 are disulfide-linked. The N-linked (GlcNAc...) asparagine glycan is linked to N62. An intrachain disulfide couples C78 to C95. Residues 139–244 (PPKDIHISPS…PEVHWDSQPG (106 aa)) form the Fibronectin type-III 1 domain. Positions 223–244 (GSSLSGRPSRWSPEVHWDSQPG) are disordered. 2 disulfide bridges follow: C254/C264 and C293/C310. The 96-residue stretch at 343–438 (QMEPPILNQT…EWSNEYTWTT (96 aa)) folds into the Fibronectin type-III 2 domain. A glycan (N-linked (GlcNAc...) asparagine) is linked at N350. The short motif at 427 to 431 (WSEWS) is the WSXWS motif element. The helical transmembrane segment at 441–462 (VMPTLWIVLILVFLIFTLLLAL) threads the bilayer. At 463 to 878 (HFGRVYGYRT…AIQFFKSLKY (416 aa)) the chain is on the cytoplasmic side. The Box 1 motif motif lies at 476 to 484 (WKEKIPNPS). Disordered regions lie at residues 539 to 620 (LTIE…GGSL) and 660 to 709 (SSLE…MASD). Residues 554–570 (PDTTPAASSESTEQLPN) show a composition bias toward polar residues. Over residues 671–689 (EPKENPPVELSVEKQEARD) the composition is skewed to basic and acidic residues. Phosphoserine is present on residues S752 and S754. The residue at position 765 (Y765) is a Phosphotyrosine. 2 disordered regions span residues 771–810 (SVSQ…PHPE) and 829–849 (PGSL…ETED).

The protein belongs to the type I cytokine receptor family. Type 4 subfamily. As to quaternary structure, heterodimer of an alpha and a beta subunit.

It is found in the membrane. In mouse, there are two classes of high-affinity IL3 receptors. One contains this IL3-specific beta subunit and the other contains the beta subunit also shared by high-affinity IL5 and GM-CSF receptors. This Mus musculus (Mouse) protein is Interleukin-3 receptor class 2 subunit beta (Csf2rb2).